Reading from the N-terminus, the 137-residue chain is uncharacterized protein (137 aa).

This is an uncharacterized protein from Saccharomyces cerevisiae (strain ATCC 204508 / S288c) (Baker's yeast).